The chain runs to 953 residues: Isoleucine--tRNA ligase (953 aa).

The 'HIGH' region signature appears at 57 to 67; sequence PYANGDIHIGH. E582 contacts L-isoleucyl-5'-AMP. The 'KMSKS' region motif lies at 623–627; it reads KMSKS. Residue K626 participates in ATP binding. Positions 916, 919, 936, and 939 each coordinate Zn(2+).

The protein belongs to the class-I aminoacyl-tRNA synthetase family. IleS type 1 subfamily. In terms of assembly, monomer. Zn(2+) serves as cofactor.

The protein resides in the cytoplasm. It carries out the reaction tRNA(Ile) + L-isoleucine + ATP = L-isoleucyl-tRNA(Ile) + AMP + diphosphate. Functionally, catalyzes the attachment of isoleucine to tRNA(Ile). As IleRS can inadvertently accommodate and process structurally similar amino acids such as valine, to avoid such errors it has two additional distinct tRNA(Ile)-dependent editing activities. One activity is designated as 'pretransfer' editing and involves the hydrolysis of activated Val-AMP. The other activity is designated 'posttransfer' editing and involves deacylation of mischarged Val-tRNA(Ile). In Bordetella bronchiseptica (strain ATCC BAA-588 / NCTC 13252 / RB50) (Alcaligenes bronchisepticus), this protein is Isoleucine--tRNA ligase.